The sequence spans 213 residues: Heat shock protein 27 (213 aa).

Serine 58 and serine 75 each carry phosphoserine. Residues serine 71–threonine 182 enclose the sHSP domain. Positions valine 157–lysine 213 are disordered. A compositionally biased stretch (basic and acidic residues) spans glycine 197–lysine 213.

The protein belongs to the small heat shock protein (HSP20) family.

This Drosophila melanogaster (Fruit fly) protein is Heat shock protein 27 (Hsp27).